The following is a 287-amino-acid chain: MTQKEIWYETLHANFGQYFSVENVLYREKTEHQDLVIFENPVLGRVMALDGVVQTTERDEFIYHEMMTHVPLLAHGQAKKVLIIGGGDGAMLREVSRHQGVEQITMVEIDAGVVEFCRQYLPNHNAGAYDDPRFKLVIDDGVNFVNQTDEKFDVIISDCTDPIGPGESLFTSAFYEGCARCLNEGGIFVAQNGVCFLQQDEAVNSHTRLSQYFKDVSFYQAAIPTYYGGIMTFAWASQDPALRQLDLTTLQHRFHQSGLNCRYYNPAIHAGSFALPQYLLDALNVSR.

In terms of domain architecture, PABS spans 5–238 (EIWYETLHAN…GIMTFAWASQ (234 aa)). Gln33 contributes to the S-methyl-5'-thioadenosine binding site. Positions 64 and 88 each coordinate spermidine. Residues Glu108 and 140–141 (DG) each bind S-methyl-5'-thioadenosine. The active-site Proton acceptor is Asp158. 158–161 (DCTD) is a spermidine binding site. Pro165 lines the S-methyl-5'-thioadenosine pocket.

Belongs to the spermidine/spermine synthase family. In terms of assembly, homodimer or homotetramer.

The protein resides in the cytoplasm. It catalyses the reaction S-adenosyl 3-(methylsulfanyl)propylamine + putrescine = S-methyl-5'-thioadenosine + spermidine + H(+). It participates in amine and polyamine biosynthesis; spermidine biosynthesis; spermidine from putrescine: step 1/1. Catalyzes the irreversible transfer of a propylamine group from the amino donor S-adenosylmethioninamine (decarboxy-AdoMet) to putrescine (1,4-diaminobutane) to yield spermidine. The polypeptide is Polyamine aminopropyltransferase (Serratia proteamaculans (strain 568)).